Consider the following 37-residue polypeptide: Putative preoptic regulatory factor 1 (37 aa).

2 consecutive propeptides follow at residues 1–7 (MPYSLQP) and 18–37 (FPLC…PPDL).

The protein belongs to the GnRH family. Preoptic area and testis.

The protein localises to the secreted. Precursor for a gonadotropin regulatory hormone (GNRH) related decapeptide. This chain is Putative preoptic regulatory factor 1 (Porf1), found in Rattus norvegicus (Rat).